A 122-amino-acid chain; its full sequence is Large ribosomal subunit protein uL18 (122 aa).

Residues 1-25 form a disordered region; it reads MSQISRKQQTQKRHRRLRRHITGTS. The segment covering 9–21 has biased composition (basic residues); the sequence is QTQKRHRRLRRHI.

The protein belongs to the universal ribosomal protein uL18 family. In terms of assembly, part of the 50S ribosomal subunit; part of the 5S rRNA/L5/L18/L25 subcomplex. Contacts the 5S and 23S rRNAs.

In terms of biological role, this is one of the proteins that bind and probably mediate the attachment of the 5S RNA into the large ribosomal subunit, where it forms part of the central protuberance. The sequence is that of Large ribosomal subunit protein uL18 from Synechococcus sp. (strain CC9605).